We begin with the raw amino-acid sequence, 352 residues long: Nuclear receptor subfamily 1 group I member 3 (352 aa).

Residues 8-83 (LRNCVVCGDQ…AGMRKDMILS (76 aa)) constitute a DNA-binding region (nuclear receptor). The NR C4-type zinc finger occupies 11 to 31 (CVVCGDQATGYHFNALTCEGC). Thr38 carries the phosphothreonine; by PKC modification. Residues 47-71 (CPFAGSCEVSKIQRRHCPACRLQKC) form an NR C4-type zinc finger. One can recognise an NR LBD domain in the interval 109-352 (EQEELIQTLL…MMPLLQEICS (244 aa)).

This sequence belongs to the nuclear hormone receptor family. NR1 subfamily. In terms of assembly, heterodimer of NR1I3 and RXR. Interacts with PSMC4. Interacts with ECT2. Directly interacts with DNAJC7; this complex may also include HSP90. Interacts with CRY1. Interacts with CRY2 in a ligand-dependent manner. Phosphorylated at Thr-38 by PKC, dephosphorylation of Thr-38 is required for nuclear translocation and activation.

It localises to the nucleus. The protein resides in the cytoplasm. The protein localises to the cytoskeleton. Functionally, binds and transactivates the retinoic acid response elements that control expression of the retinoic acid receptor beta 2 and alcohol dehydrogenase 3 genes. Transactivates both the phenobarbital responsive element module of the human CYP2B6 gene and the CYP3A4 xenobiotic response element. This Macaca mulatta (Rhesus macaque) protein is Nuclear receptor subfamily 1 group I member 3 (NR1I3).